An 844-amino-acid polypeptide reads, in one-letter code: Fe(2+) transport protein A/Fe(2+) transporter FeoB fusion protein (844 aa).

Residues 1–73 (MRLSELHTGD…EDAAKIEVEL (73 aa)) form a feoA region. The feoB stretch occupies residues 74 to 844 (ISSNATSSPA…LIYRIGILFF (771 aa)). The span at 79-106 (TSSPASNDIGEQSANPDSNESIPTNPTE) shows a compositional bias: polar residues. The interval 79–110 (TSSPASNDIGEQSANPDSNESIPTNPTEDISA) is disordered. The FeoB-type G domain maps to 126 to 289 (VIRVALIGNP…FDTLISIHEG (164 aa)). Residues 133–140 (GNPNCGKT), 158–162 (GVTVE), 179–182 (DLPG), 240–243 (NMFD), and 269–271 (VGR) each bind GTP. 8 consecutive transmembrane segments (helical) span residues 418–438 (VLGF…TFVL), 475–495 (IGGV…YFFI), 520–540 (LHGK…PAIM), 559–579 (PLMS…AFFP), 581–601 (SAGL…VLLA), 646–666 (MGSI…YPRY), 786–806 (IIAL…ATVV), and 817–837 (WAVF…FLIY).

It in the N-terminal section; belongs to the FeoA family. The protein in the C-terminal section; belongs to the TRAFAC class TrmE-Era-EngA-EngB-Septin-like GTPase superfamily. FeoB GTPase (TC 9.A.8) family.

Its subcellular location is the cell inner membrane. Its function is as follows. Probable transporter of a GTP-driven Fe(2+) uptake system. This is Fe(2+) transport protein A/Fe(2+) transporter FeoB fusion protein from Porphyromonas gingivalis (strain ATCC BAA-308 / W83).